A 386-amino-acid chain; its full sequence is MKINCLFCCMSHRRFNRRSSSRQSIKDCIDAKNNITTFDNISFKTDSSRRRYISEEIAKLGKGNISAHIFTFRELCVATKNFNPDNQLGEGGFGRVYKGQIETPEQVVAVKQLDRNGYQGNREFLVEVMMLSLLHHQNLVNLVGYCADGDQRILVYEYMQNGSLEDHLLELARNKKKPLDWDTRMKVAAGAARGLEYLHETADPPVIYRDFKASNILLDEEFNPKLSDFGLAKVGPTGGETHVSTRVMGTYGYCAPEYALTGQLTVKSDVYSFGVVFLEMITGRRVIDTTKPTEEQNLVTWASPLFKDRRKFTLMADPLLEGKYPIKGLYQALAVAAMCLQEEAATRPMMSDVVTALEYLAVTKTEEDGQTVEGEEEEEEDERSKL.

C5 is lipidated: S-palmitoyl cysteine. Residues 82 to 360 (FNPDNQLGEG…SDVVTALEYL (279 aa)) enclose the Protein kinase domain. ATP-binding positions include 88–96 (LGEGGFGRV) and K111. D210 acts as the Proton acceptor in catalysis. The interval 365–386 (TEEDGQTVEGEEEEEEDERSKL) is disordered. Over residues 368–386 (DGQTVEGEEEEEEDERSKL) the composition is skewed to acidic residues.

This sequence belongs to the protein kinase superfamily. Ser/Thr protein kinase family.

Its subcellular location is the cell membrane. It catalyses the reaction L-seryl-[protein] + ATP = O-phospho-L-seryl-[protein] + ADP + H(+). The catalysed reaction is L-threonyl-[protein] + ATP = O-phospho-L-threonyl-[protein] + ADP + H(+). In terms of biological role, may be involved in plant defense signaling. The polypeptide is Probable serine/threonine-protein kinase PBL23 (Arabidopsis thaliana (Mouse-ear cress)).